Reading from the N-terminus, the 279-residue chain is Glutamate racemase (279 aa).

Residues 13–14 (DS) and 45–46 (YG) each bind substrate. Cysteine 76 serves as the catalytic Proton donor/acceptor. 77 to 78 (NT) is a substrate binding site. Residue cysteine 185 is the Proton donor/acceptor of the active site. 186–187 (TH) serves as a coordination point for substrate.

The protein belongs to the aspartate/glutamate racemases family.

It catalyses the reaction L-glutamate = D-glutamate. Its pathway is cell wall biogenesis; peptidoglycan biosynthesis. In terms of biological role, provides the (R)-glutamate required for cell wall biosynthesis. In Synechocystis sp. (strain ATCC 27184 / PCC 6803 / Kazusa), this protein is Glutamate racemase.